The primary structure comprises 101 residues: Ribonuclease kappa-A (101 aa).

2 helical membrane passes run 13–33 (ACGI…GVFF) and 68–88 (VSYN…FSFC).

The protein belongs to the RNase K family.

The protein localises to the membrane. Its function is as follows. Endoribonuclease which preferentially cleaves ApU and ApG phosphodiester bonds. The chain is Ribonuclease kappa-A (rnasek-a) from Xenopus laevis (African clawed frog).